The chain runs to 328 residues: Arabinose 5-phosphate isomerase KdsD (328 aa).

The region spanning 42–184 (CEKMFWCKGK…AVALLKARGF (143 aa)) is the SIS domain. Substrate contacts are provided by residues 75–76 (GT), His-82, His-88, 114–123 (ALIPVLKRLH), 148–150 (KVA), Thr-222, and Asp-275. His-82 is a binding site for Zn(2+). One can recognise a CBS 1 domain in the interval 210–268 (MHTGDEIPHVKKTASLRDALLEVTRKNLGMTVICDDNMMIEGIFTDGDLRRVFDMGVDV). The 52-residue stretch at 277–328 (MTPGGIRVRPGILAVEALNLMQSRHITSVMVADGDHLLGVLHMHDLLRAGVV) folds into the CBS 2 domain.

The protein belongs to the SIS family. GutQ/KpsF subfamily. In terms of assembly, homotetramer.

The enzyme catalyses D-arabinose 5-phosphate = D-ribulose 5-phosphate. Its pathway is carbohydrate biosynthesis; 3-deoxy-D-manno-octulosonate biosynthesis; 3-deoxy-D-manno-octulosonate from D-ribulose 5-phosphate: step 1/3. It functions in the pathway bacterial outer membrane biogenesis; lipopolysaccharide biosynthesis. Its function is as follows. Involved in the biosynthesis of 3-deoxy-D-manno-octulosonate (KDO), a unique 8-carbon sugar component of lipopolysaccharides (LPSs). Catalyzes the reversible aldol-ketol isomerization between D-ribulose 5-phosphate (Ru5P) and D-arabinose 5-phosphate (A5P). The sequence is that of Arabinose 5-phosphate isomerase KdsD (kdsD) from Escherichia coli O157:H7.